A 389-amino-acid chain; its full sequence is NADH-quinone oxidoreductase subunit D (389 aa).

This sequence belongs to the complex I 49 kDa subunit family. As to quaternary structure, NDH-1 is composed of 14 different subunits. Subunits NuoB, C, D, E, F, and G constitute the peripheral sector of the complex.

It is found in the cell inner membrane. The catalysed reaction is a quinone + NADH + 5 H(+)(in) = a quinol + NAD(+) + 4 H(+)(out). Its function is as follows. NDH-1 shuttles electrons from NADH, via FMN and iron-sulfur (Fe-S) centers, to quinones in the respiratory chain. The immediate electron acceptor for the enzyme in this species is believed to be ubiquinone. Couples the redox reaction to proton translocation (for every two electrons transferred, four hydrogen ions are translocated across the cytoplasmic membrane), and thus conserves the redox energy in a proton gradient. The polypeptide is NADH-quinone oxidoreductase subunit D (Rickettsia prowazekii (strain Madrid E)).